Here is a 476-residue protein sequence, read N- to C-terminus: Ribulose bisphosphate carboxylase large chain (476 aa).

Positions 1–2 are excised as a propeptide; the sequence is MS. Pro-3 bears the N-acetylproline mark. Lys-14 bears the N6,N6,N6-trimethyllysine mark. The substrate site is built by Asn-123 and Thr-173. The Proton acceptor role is filled by Lys-175. Lys-177 is a binding site for substrate. Residues Lys-201, Asp-203, and Glu-204 each coordinate Mg(2+). Lys-201 is subject to N6-carboxylysine. His-294 functions as the Proton acceptor in the catalytic mechanism. 3 residues coordinate substrate: Arg-295, His-327, and Ser-379.

Belongs to the RuBisCO large chain family. Type I subfamily. As to quaternary structure, heterohexadecamer of 8 large chains and 8 small chains; disulfide-linked. The disulfide link is formed within the large subunit homodimers. The cofactor is Mg(2+). The disulfide bond which can form in the large chain dimeric partners within the hexadecamer appears to be associated with oxidative stress and protein turnover.

The protein resides in the plastid. The protein localises to the chloroplast. It carries out the reaction 2 (2R)-3-phosphoglycerate + 2 H(+) = D-ribulose 1,5-bisphosphate + CO2 + H2O. It catalyses the reaction D-ribulose 1,5-bisphosphate + O2 = 2-phosphoglycolate + (2R)-3-phosphoglycerate + 2 H(+). In terms of biological role, ruBisCO catalyzes two reactions: the carboxylation of D-ribulose 1,5-bisphosphate, the primary event in carbon dioxide fixation, as well as the oxidative fragmentation of the pentose substrate in the photorespiration process. Both reactions occur simultaneously and in competition at the same active site. This Zea mays (Maize) protein is Ribulose bisphosphate carboxylase large chain.